A 302-amino-acid polypeptide reads, in one-letter code: 4-hydroxy-tetrahydrodipicolinate synthase (302 aa).

Thr-46 serves as a coordination point for pyruvate. Tyr-135 functions as the Proton donor/acceptor in the catalytic mechanism. The Schiff-base intermediate with substrate role is filled by Lys-164. Residue Val-206 participates in pyruvate binding.

The protein belongs to the DapA family. Homotetramer; dimer of dimers.

It is found in the cytoplasm. The catalysed reaction is L-aspartate 4-semialdehyde + pyruvate = (2S,4S)-4-hydroxy-2,3,4,5-tetrahydrodipicolinate + H2O + H(+). Its pathway is amino-acid biosynthesis; L-lysine biosynthesis via DAP pathway; (S)-tetrahydrodipicolinate from L-aspartate: step 3/4. Its function is as follows. Catalyzes the condensation of (S)-aspartate-beta-semialdehyde [(S)-ASA] and pyruvate to 4-hydroxy-tetrahydrodipicolinate (HTPA). This chain is 4-hydroxy-tetrahydrodipicolinate synthase, found in Acidobacterium capsulatum (strain ATCC 51196 / DSM 11244 / BCRC 80197 / JCM 7670 / NBRC 15755 / NCIMB 13165 / 161).